The primary structure comprises 352 residues: NADP-dependent oxidoreductase RED1 (352 aa).

NADP(+) contacts are provided by residues G166–G169, K192, Y208, N231, and F285–V287.

Belongs to the NADP-dependent oxidoreductase L4BD family.

Its pathway is mycotoxin biosynthesis. Functionally, NADP-dependent oxidoreductase; part of the Tox1B locus, one of the 2 loci that mediate the biosynthesis of T-toxin, a family of linear polyketides 37 to 45 carbons in length, of which the major component is 41 carbons, and which leads to high virulence to maize. One of the PKSs (PKS1 or PKS2) could synthesize a precursor, used subsequently by the other PKS as starter unit, to add additional carbons. Variability in the length of the final carbon backbone C35-47 could be achieved by varying the number of condensation cycles, or use of different starter or extender units or might be due to decarboxylation of the penultimate product, catalyzed by DEC1. Additional proteins are required for the biosynthesis of T-toxin, including oxidoreductases RED1, RED2, RED3, LAM1 and OXI1, as well as esterase TOX9. In Cochliobolus heterostrophus (strain C4 / ATCC 48331 / race T) (Southern corn leaf blight fungus), this protein is NADP-dependent oxidoreductase RED1.